Here is a 386-residue protein sequence, read N- to C-terminus: Chaperone protein DnaJ (386 aa).

A J domain is found at 5-69 (DLYDVLGVKK…QKRAQYDQFG (65 aa)). The CR-type zinc finger occupies 140–224 (GKETSIKYNR…CHGAGVTEER (85 aa)). Positions 153, 156, 170, 173, 196, 199, 212, and 215 each coordinate Zn(2+). 4 CXXCXGXG motif repeats span residues 153-160 (CHTCHGSG), 170-177 (CSTCHGQG), 196-203 (CPTCGGKG), and 212-219 (CDTCHGAG).

Belongs to the DnaJ family. Homodimer. Requires Zn(2+) as cofactor.

The protein resides in the cytoplasm. Participates actively in the response to hyperosmotic and heat shock by preventing the aggregation of stress-denatured proteins and by disaggregating proteins, also in an autonomous, DnaK-independent fashion. Unfolded proteins bind initially to DnaJ; upon interaction with the DnaJ-bound protein, DnaK hydrolyzes its bound ATP, resulting in the formation of a stable complex. GrpE releases ADP from DnaK; ATP binding to DnaK triggers the release of the substrate protein, thus completing the reaction cycle. Several rounds of ATP-dependent interactions between DnaJ, DnaK and GrpE are required for fully efficient folding. Also involved, together with DnaK and GrpE, in the DNA replication of plasmids through activation of initiation proteins. The polypeptide is Chaperone protein DnaJ (Limosilactobacillus fermentum (strain NBRC 3956 / LMG 18251) (Lactobacillus fermentum)).